We begin with the raw amino-acid sequence, 428 residues long: D-amino acid dehydrogenase (428 aa).

FAD is bound at residue 3–17 (VVILGSGVVGVASAY).

It belongs to the DadA oxidoreductase family. The cofactor is FAD.

It catalyses the reaction a D-alpha-amino acid + A + H2O = a 2-oxocarboxylate + AH2 + NH4(+). Its pathway is amino-acid degradation; D-alanine degradation; NH(3) and pyruvate from D-alanine: step 1/1. Functionally, oxidative deamination of D-amino acids. This chain is D-amino acid dehydrogenase, found in Burkholderia vietnamiensis (strain G4 / LMG 22486) (Burkholderia cepacia (strain R1808)).